We begin with the raw amino-acid sequence, 76 residues long: MATFDDVKDVIVDKLGVDEGKVTPEARFVEDLGADSLETVELIMGLEDKFGVTIPDEAAETIRTVQAAVDYIDNNQ.

The 76-residue stretch at methionine 1–glutamine 76 folds into the Carrier domain. O-(pantetheine 4'-phosphoryl)serine is present on serine 36.

Belongs to the acyl carrier protein (ACP) family. In terms of processing, 4'-phosphopantetheine is transferred from CoA to a specific serine of apo-ACP by AcpS. This modification is essential for activity because fatty acids are bound in thioester linkage to the sulfhydryl of the prosthetic group.

The protein resides in the cytoplasm. The protein operates within lipid metabolism; fatty acid biosynthesis. Its function is as follows. Carrier of the growing fatty acid chain in fatty acid biosynthesis. In Deinococcus radiodurans (strain ATCC 13939 / DSM 20539 / JCM 16871 / CCUG 27074 / LMG 4051 / NBRC 15346 / NCIMB 9279 / VKM B-1422 / R1), this protein is Acyl carrier protein.